Consider the following 643-residue polypeptide: MVDAAGFESVAQCPRELHQMMAAAADGLGSIALDTTQLNMSVTDPTAWATAMNNLGMVPVGLPGQQLVSDSICVPGFDPGLNMMTGITPINPMIPGLGLVPPPPPTEVAVVKEIIHCKSCTLFPQNPNLPPPSTRERPPGCKTVFVGGLPENATEEIIQEVFEQCGDITAIRKSKKNFCHIRFAEEFMVDKAIYLSGYRMRLGSSTDKKDSGRLHVDFAQARDDFYEWECKQRMRAREERHRRKLEEDRLRPPSPPAIMHYSEHEAALLADKLKDDSKFSEAITVLLSWIERGEVNRRSANQFYSMVQSANSHVRRLMNEKATHEQEMEEAKENFKNALTGILTQFEQIVAVFNASTRQKAWDHFSKAQRKNIDIWRKHSEELRNAQSEQLMGIRREEEMEMSDDENCDSPTKKMRVDESALAAQAYALKEENDSLRWQLDAYRNEVELLKQEKEQLFRTEENLTKDQQLQFLQQTMQGMQQQLLAIQEELNNKKSELEQAKEEQSHTQALLKVLQEQLKGTKDLVETNGHSHEDANEINVLTVALVNQDRENNTEKRSQGLKSEKEALLIGIISTFLHVHPFGANIEYLWSYMQQLDSKISANEIEMLLMRLPRMFKQEFTGVGATLEKRWKLCAFEGIKTT.

The 80-residue stretch at 142–221 (KTVFVGGLPE…GRLHVDFAQA (80 aa)) folds into the RRM domain. Coiled-coil stretches lie at residues 307–342 (VQSA…LTGI) and 425–521 (QAYA…QLKG).

It belongs to the ENOX family. Requires Cu cation as cofactor.

It localises to the cell membrane. Its subcellular location is the secreted. The protein resides in the extracellular space. With respect to regulation, not inhibited by the antitumor sulfonylurea LY181984, the vabilloid capsaicin, and retinoids. Functionally, probably acts as a terminal oxidase of plasma electron transport from cytosolic NAD(P)H via hydroquinones to acceptors at the cell surface. Hydroquinone oxidase activity alternates with a protein disulfide-thiol interchange/oxidoreductase activity which may control physical membrane displacements associated with vesicle budding or cell enlargement. The activities oscillate with a period length of 24 minutes and play a role in control of the ultradian cellular biological clock. The sequence is that of Ecto-NOX disulfide-thiol exchanger 1 (Enox1) from Mus musculus (Mouse).